The following is a 527-amino-acid chain: Mitogen-activated protein kinase kinae MKK2 (527 aa).

Disordered regions lie at residues 1 to 143 (MHDQ…SAGS) and 156 to 189 (IGST…DKDG). Residues 107 to 129 (QQGQSASGGSESSAAHSRSGSFG) show a composition bias toward low complexity. Positions 134–143 (RTSNPTSAGS) are enriched in polar residues. The segment covering 177-189 (ERSDGGAGMDKDG) has biased composition (basic and acidic residues). The Protein kinase domain occupies 227–497 (IVELGGLGEG…PWRMLEHPWM (271 aa)). Residues 233 to 241 (LGEGAGGAV) and lysine 256 each bind ATP.

This sequence belongs to the protein kinase superfamily. STE Ser/Thr protein kinase family. MAP kinase kinase subfamily. In terms of assembly, interacts with the adapter protein MST50.

It catalyses the reaction L-seryl-[protein] + ATP = O-phospho-L-seryl-[protein] + ADP + H(+). The catalysed reaction is L-threonyl-[protein] + ATP = O-phospho-L-threonyl-[protein] + ADP + H(+). Its function is as follows. Mitogen-activated protein kinase kinase; part of the MCK1-MKK2-MPS1 MAP kinase (MAPK) signal transduction cascade that is essential for appressorium formation, penetration and invasive growth. Beside its role in pathogenesis, the MPS1 cascade is active in conidiation and cellular stress responses. Targets downstream of the the MPS1-MAPK pathway include transcription factors MIG1 and SWI6, as well as GSK1 and MPG1. The protein is Mitogen-activated protein kinase kinae MKK2 of Pyricularia oryzae (strain 70-15 / ATCC MYA-4617 / FGSC 8958) (Rice blast fungus).